The chain runs to 338 residues: MNNLYQRDCLRLLDFTSLELQNIITLAQKLKQYKKNNKEIQLLKKKNIALIFEKESTRTRCSFEVAAFDQGAHVTYLGPGSTHLGTKESIEDTAKILGRLYDGIQYRGHHHSTIEILAKNSKVPVWNGLTEKFHPTQLLADLLTIKEIFPERKFYEIKCAYVGDAHNNMGNSLLEAASLVGLDLRLVAPKECWPEKNIFKFCKEQIKNKKGNIICTENINEGVKNVDFIYTDVWVSMGESKEVWKKRIELLSSYQVNSLMLKITNNPQVKVLHCLPALHDQKTCTVKSILKKYGFKNGMEITDEVFQKNQKIIFEQAENRLHTIKAILVSSLLKTIKF.

Residues 56 to 59 (STRT), arginine 107, and 134 to 137 (HPTQ) each bind carbamoyl phosphate. Residues asparagine 168, aspartate 232, and 236–237 (SM) each bind L-ornithine. Carbamoyl phosphate-binding positions include 274-275 (CL) and arginine 320.

It belongs to the aspartate/ornithine carbamoyltransferase superfamily. OTCase family.

The protein localises to the cytoplasm. The catalysed reaction is carbamoyl phosphate + L-ornithine = L-citrulline + phosphate + H(+). It functions in the pathway amino-acid degradation; L-arginine degradation via ADI pathway; carbamoyl phosphate from L-arginine: step 2/2. Functionally, reversibly catalyzes the transfer of the carbamoyl group from carbamoyl phosphate (CP) to the N(epsilon) atom of ornithine (ORN) to produce L-citrulline. The sequence is that of Ornithine carbamoyltransferase from Buchnera aphidicola subsp. Acyrthosiphon pisum (strain 5A).